A 304-amino-acid polypeptide reads, in one-letter code: Carnitine monooxygenase reductase subunit (304 aa).

Residues 1–93 enclose the FAD-binding FR-type domain; the sequence is MEQLTPLIKR…SEPKNLFPLA (93 aa). The 2Fe-2S ferredoxin-type domain maps to 219-304; it reads FTVVLAKSNQ…AKGKKLVLDL (86 aa). Residues C253, C258, C261, and C291 each contribute to the [2Fe-2S] cluster site.

The protein belongs to the PDR/VanB family. CntB subfamily. Composed of an oxygenase subunit and a reductase subunit. FMN is required as a cofactor. It depends on [2Fe-2S] cluster as a cofactor.

The enzyme catalyses (R)-carnitine + NADH + O2 + H(+) = (3R)-3-hydroxy-4-oxobutanoate + trimethylamine + NAD(+) + H2O. It carries out the reaction (R)-carnitine + NADPH + O2 + H(+) = (3R)-3-hydroxy-4-oxobutanoate + trimethylamine + NADP(+) + H2O. It participates in amine and polyamine metabolism; carnitine metabolism. Inhibited by EDTA. In terms of biological role, converts carnitine to trimethylamine and malic semialdehyde. Acts on both enantiomers. In Acinetobacter pittii (strain PHEA-2), this protein is Carnitine monooxygenase reductase subunit.